A 192-amino-acid chain; its full sequence is Small ribosomal subunit protein eS7 (192 aa).

This sequence belongs to the eukaryotic ribosomal protein eS7 family.

This Anopheles gambiae (African malaria mosquito) protein is Small ribosomal subunit protein eS7 (RpS7).